We begin with the raw amino-acid sequence, 435 residues long: Trigger factor (435 aa).

The region spanning 183–263 (GDFINVDVTI…VKTIWQGNMP (81 aa)) is the PPIase FKBP-type domain.

Belongs to the FKBP-type PPIase family. Tig subfamily.

Its subcellular location is the cytoplasm. The catalysed reaction is [protein]-peptidylproline (omega=180) = [protein]-peptidylproline (omega=0). Involved in protein export. Acts as a chaperone by maintaining the newly synthesized protein in an open conformation. Functions as a peptidyl-prolyl cis-trans isomerase. The sequence is that of Trigger factor from Protochlamydia amoebophila (strain UWE25).